The sequence spans 29 residues: ShK homolog Ask132958 (29 aa).

Residues 1–29 (CENTISGCSRADCLLTHRKQGCQKTCGLC) enclose the ShKT domain. 3 disulfide bridges follow: cysteine 1–cysteine 29, cysteine 8–cysteine 22, and cysteine 13–cysteine 26.

It belongs to the sea anemone type 1 potassium channel toxin family. Type 1a subfamily.

The protein resides in the secreted. It is found in the nematocyst. Its function is as follows. This peptide is similar to the potassium channel toxin ShK, but does not show activity on potassium channels. It appears that Lys-19, which is expected to occupy the pore of the channel, is not sufficiently accessible for binding, and therefore that this peptide must have a distinct functional role that does not involve potassium channels. It is noteworthy that this peptide is much more stable in the presence of trypsin, chymotrypsin and pepsin than the toxin ShK. This chain is ShK homolog Ask132958, found in Anemonia sulcata (Mediterranean snakelocks sea anemone).